The sequence spans 399 residues: Succinate--CoA ligase [ADP-forming] subunit beta (399 aa).

Residues 9 to 254 (KAVLAEFGAP…ESEEDPKEIE (246 aa)) enclose the ATP-grasp domain. Residues lysine 46, 53–55 (GRG), glutamate 109, alanine 112, and glutamate 117 contribute to the ATP site. The Mg(2+) site is built by asparagine 209 and aspartate 223. Substrate contacts are provided by residues asparagine 274 and 331–333 (GIM).

This sequence belongs to the succinate/malate CoA ligase beta subunit family. Heterotetramer of two alpha and two beta subunits. It depends on Mg(2+) as a cofactor.

The catalysed reaction is succinate + ATP + CoA = succinyl-CoA + ADP + phosphate. The enzyme catalyses GTP + succinate + CoA = succinyl-CoA + GDP + phosphate. The protein operates within carbohydrate metabolism; tricarboxylic acid cycle; succinate from succinyl-CoA (ligase route): step 1/1. Succinyl-CoA synthetase functions in the citric acid cycle (TCA), coupling the hydrolysis of succinyl-CoA to the synthesis of either ATP or GTP and thus represents the only step of substrate-level phosphorylation in the TCA. The beta subunit provides nucleotide specificity of the enzyme and binds the substrate succinate, while the binding sites for coenzyme A and phosphate are found in the alpha subunit. The chain is Succinate--CoA ligase [ADP-forming] subunit beta from Caulobacter sp. (strain K31).